Here is a 257-residue protein sequence, read N- to C-terminus: MTDLKKAAQRGIELMDLTTLNDDDTDQKVIDLCHKAKSPAGNTAAICIYPRFIPIARKTLNELDCEDIKIATVTNFPHGNDDIAIAVLETRAAVAYGADEVDVVFPYRALMDGNETVGFEMVKACKEECGDDAILKVIIESGVLKDPALIRKASELAIDAGADFIKTSTGKVPVNATLEAAEIMLTVISEKNRNVGFKPAGGVRDAAQTAEFLDLAARILGDDWVTPQTFRFGASSLLNSLLHTLELVDAPKPTSGY.

The Proton donor/acceptor role is filled by Asp-102. Lys-166 functions as the Schiff-base intermediate with acetaldehyde in the catalytic mechanism. The active-site Proton donor/acceptor is the Lys-198.

This sequence belongs to the DeoC/FbaB aldolase family. DeoC type 2 subfamily.

It is found in the cytoplasm. It catalyses the reaction 2-deoxy-D-ribose 5-phosphate = D-glyceraldehyde 3-phosphate + acetaldehyde. The protein operates within carbohydrate degradation; 2-deoxy-D-ribose 1-phosphate degradation; D-glyceraldehyde 3-phosphate and acetaldehyde from 2-deoxy-alpha-D-ribose 1-phosphate: step 2/2. Catalyzes a reversible aldol reaction between acetaldehyde and D-glyceraldehyde 3-phosphate to generate 2-deoxy-D-ribose 5-phosphate. This is Deoxyribose-phosphate aldolase from Shewanella frigidimarina (strain NCIMB 400).